We begin with the raw amino-acid sequence, 293 residues long: Proteinase T (293 aa).

A propeptide spanning residues 1–12 is cleaved from the precursor; that stretch reads EFIEQDAVVTIS. Residues 19–293 form the Peptidase S8 domain; it reads PWGLARISSQ…VLINNGEGSA (275 aa). Disulfide bonds link Cys46-Cys137 and Cys192-Cys262. Active-site charge relay system residues include Asp51, His83, and Ser238.

It belongs to the peptidase S8 family.

Serine proteinase. This is Proteinase T (PROT) from Parengyodontium album (Tritirachium album).